We begin with the raw amino-acid sequence, 211 residues long: Urease accessory protein UreG (211 aa).

16-23 is a binding site for GTP; the sequence is GPVGSGKT.

This sequence belongs to the SIMIBI class G3E GTPase family. UreG subfamily. Homodimer. UreD, UreF and UreG form a complex that acts as a GTP-hydrolysis-dependent molecular chaperone, activating the urease apoprotein by helping to assemble the nickel containing metallocenter of UreC. The UreE protein probably delivers the nickel.

Its subcellular location is the cytoplasm. Functionally, facilitates the functional incorporation of the urease nickel metallocenter. This process requires GTP hydrolysis, probably effectuated by UreG. This chain is Urease accessory protein UreG, found in Janthinobacterium sp. (strain Marseille) (Minibacterium massiliensis).